A 238-amino-acid chain; its full sequence is tRNA (guanine-N(7)-)-methyltransferase (238 aa).

4 residues coordinate S-adenosyl-L-methionine: E68, E93, D120, and D143. Residue D143 is part of the active site. Residues K147, D179, and 216-219 each bind substrate; that span reads TKFE.

This sequence belongs to the class I-like SAM-binding methyltransferase superfamily. TrmB family.

The enzyme catalyses guanosine(46) in tRNA + S-adenosyl-L-methionine = N(7)-methylguanosine(46) in tRNA + S-adenosyl-L-homocysteine. It participates in tRNA modification; N(7)-methylguanine-tRNA biosynthesis. In terms of biological role, catalyzes the formation of N(7)-methylguanine at position 46 (m7G46) in tRNA. The chain is tRNA (guanine-N(7)-)-methyltransferase from Shewanella sp. (strain MR-4).